The following is a 113-amino-acid chain: Small ribosomal subunit protein bS6 (113 aa).

Belongs to the bacterial ribosomal protein bS6 family.

In terms of biological role, binds together with bS18 to 16S ribosomal RNA. The sequence is that of Small ribosomal subunit protein bS6 from Pseudoalteromonas translucida (strain TAC 125).